Reading from the N-terminus, the 163-residue chain is Nucleotide-binding protein YajQ (163 aa).

The protein belongs to the YajQ family.

In terms of biological role, nucleotide-binding protein. The polypeptide is Nucleotide-binding protein YajQ (Shigella flexneri).